The chain runs to 1093 residues: Regulator of nonsense transcripts 1 homolog (1093 aa).

Residues 42 to 79 are disordered; the sequence is YGVYGGRGPRGNGRRRHDDDDNETEVLDDDDDESLASV. Residues 61-75 show a composition bias toward acidic residues; the sequence is DDNETEVLDDDDDES. In terms of domain architecture, Upf1 CH-rich spans 95 to 252; the sequence is EKELPPHACA…AKLEEMWKEA (158 aa). 12 residues coordinate Zn(2+): cysteine 103, cysteine 106, cysteine 117, cysteine 120, cysteine 125, histidine 135, histidine 139, histidine 145, cysteine 163, cysteine 166, cysteine 189, and cysteine 193. Positions 103 to 135 are C3H; that stretch reads CAYCGIHSPSSVVKCLTCNKWFCSAKGSAFSSH. The tract at residues 117–145 is CC/SHH/C; sequence CLTCNKWFCSAKGSAFSSHIVNHLVRARH. The interval 163–193 is C4; that stretch reads CYNCGTKNVFILGFIPAKSDTVVVLLCRQPC. ATP contacts are provided by residues glutamine 460, 480-484, glutamine 650, tyrosine 687, and glutamate 818; that span reads GTGKT.

Belongs to the DNA2/NAM7 helicase family.

It localises to the cytoplasm. It carries out the reaction ATP + H2O = ADP + phosphate + H(+). Functionally, RNA-dependent helicase required for nonsense-mediated decay (NMD) of aberrant mRNAs containing premature stop codons and modulates the expression level of normal mRNAs. Also capable of unwinding double-stranded DNA and translocating on single-stranded DNA. This is Regulator of nonsense transcripts 1 homolog from Neurospora crassa (strain ATCC 24698 / 74-OR23-1A / CBS 708.71 / DSM 1257 / FGSC 987).